The sequence spans 521 residues: MAP kinase-activated protein kinase mak-1 (521 aa).

Residues 1-12 (MMFEYEEDEDPM) show a composition bias toward acidic residues. Positions 1 to 36 (MMFEYEEDEDPMEQQKHEEFKHHSTDHSGSPQENPF) are disordered. Residues 13-26 (EQQKHEEFKHHSTD) are compositionally biased toward basic and acidic residues. One can recognise a Protein kinase domain in the interval 144–405 (TISAEIIGIG…IHELMATPLV (262 aa)). ATP-binding positions include 150 to 158 (IGIGESGKV) and lysine 173. Aspartate 266 functions as the Proton acceptor in the catalytic mechanism.

Belongs to the protein kinase superfamily. CAMK Ser/Thr protein kinase family. As to quaternary structure, may interact (via protein kinase domain) with unc-22 (via protein kinase and CRD domains). Mg(2+) serves as cofactor. Post-translationally, autophosphorylated in vitro. Expressed in body wall muscles (at protein level). Expressed in intestine.

It is found in the cytoplasm. Its subcellular location is the myofibril. It localises to the sarcomere. The protein resides in the a band. The enzyme catalyses L-seryl-[protein] + ATP = O-phospho-L-seryl-[protein] + ADP + H(+). It catalyses the reaction L-threonyl-[protein] + ATP = O-phospho-L-threonyl-[protein] + ADP + H(+). Its function is as follows. Serine/threonine-protein kinase which may play a role in body wall muscle contraction. May phosphorylate unc-22/twitchin. The polypeptide is MAP kinase-activated protein kinase mak-1 (Caenorhabditis elegans).